The primary structure comprises 615 residues: Medium-chain acyl-CoA ligase ACSF2, mitochondrial (615 aa).

The N-terminal 41 residues, 1 to 41 (MAVYVGMLRLGRLCAGSSGVLGARVALSRSWQEARLQGVRF), are a transit peptide targeting the mitochondrion. At Lys179 the chain carries N6-acetyllysine. Lys182 carries the post-translational modification N6-acetyllysine; alternate. Lys182 bears the N6-succinyllysine; alternate mark. 263 to 271 (TSGTTGSPK) is a binding site for ATP. 2 positions are modified to N6-acetyllysine: Lys340 and Lys398. Lys478 is subject to N6-succinyllysine. Positions 493 and 508 each coordinate ATP. Position 510 is an N6-acetyllysine (Lys510). Lys544 and Lys570 each carry N6-acetyllysine; alternate. Lys544 and Lys570 each carry N6-succinyllysine; alternate. Residue Lys599 participates in ATP binding. Lys599 is modified (N6-succinyllysine).

It belongs to the ATP-dependent AMP-binding enzyme family.

It is found in the mitochondrion. It catalyses the reaction a medium-chain fatty acid + ATP + CoA = a medium-chain fatty acyl-CoA + AMP + diphosphate. The enzyme catalyses octanoate + ATP + CoA = octanoyl-CoA + AMP + diphosphate. Acyl-CoA synthases catalyze the initial reaction in fatty acid metabolism, by forming a thioester with CoA. Has some preference toward medium-chain substrates. Plays a role in adipocyte differentiation. This is Medium-chain acyl-CoA ligase ACSF2, mitochondrial from Pongo abelii (Sumatran orangutan).